We begin with the raw amino-acid sequence, 64 residues long: MKLIIYVKEGESIDRVLKKWKQKFDKARIIRKLRERQQYIKPSERKRKILTKAKYREFLISKNS.

This sequence belongs to the bacterial ribosomal protein bS21 family.

This is Small ribosomal subunit protein bS21 from Karelsulcia muelleri (strain GWSS) (Sulcia muelleri).